Here is a 397-residue protein sequence, read N- to C-terminus: Phosphoglycerate kinase (397 aa).

Residues 21 to 23, Arg-37, 60 to 63, Arg-119, and Arg-152 each bind substrate; these read DFN and HLGR. ATP is bound by residues Lys-203, Gly-294, Glu-325, and 354–357; that span reads GGDS.

Belongs to the phosphoglycerate kinase family. As to quaternary structure, monomer.

The protein resides in the cytoplasm. The enzyme catalyses (2R)-3-phosphoglycerate + ATP = (2R)-3-phospho-glyceroyl phosphate + ADP. It participates in carbohydrate degradation; glycolysis; pyruvate from D-glyceraldehyde 3-phosphate: step 2/5. This is Phosphoglycerate kinase from Chlorobium phaeovibrioides (strain DSM 265 / 1930) (Prosthecochloris vibrioformis (strain DSM 265)).